Consider the following 442-residue polypeptide: Trigger factor (442 aa).

Residues 165–250 (DDTAQIDFEG…LHKILQKELP (86 aa)) enclose the PPIase FKBP-type domain.

This sequence belongs to the FKBP-type PPIase family. Tig subfamily.

It is found in the cytoplasm. It catalyses the reaction [protein]-peptidylproline (omega=180) = [protein]-peptidylproline (omega=0). Its function is as follows. Involved in protein export. Acts as a chaperone by maintaining the newly synthesized protein in an open conformation. Functions as a peptidyl-prolyl cis-trans isomerase. This is Trigger factor from Helicobacter hepaticus (strain ATCC 51449 / 3B1).